Here is a 217-residue protein sequence, read N- to C-terminus: tRNA (guanine-N(7)-)-methyltransferase (217 aa).

S-adenosyl-L-methionine contacts are provided by E44, E69, D96, and D118. Residue D118 is part of the active site. Residues K122, D154, and 191–194 (TEYE) contribute to the substrate site.

It belongs to the class I-like SAM-binding methyltransferase superfamily. TrmB family.

It catalyses the reaction guanosine(46) in tRNA + S-adenosyl-L-methionine = N(7)-methylguanosine(46) in tRNA + S-adenosyl-L-homocysteine. Its pathway is tRNA modification; N(7)-methylguanine-tRNA biosynthesis. Catalyzes the formation of N(7)-methylguanine at position 46 (m7G46) in tRNA. The protein is tRNA (guanine-N(7)-)-methyltransferase of Bacillus cytotoxicus (strain DSM 22905 / CIP 110041 / 391-98 / NVH 391-98).